Consider the following 83-residue polypeptide: Small ribosomal subunit protein bS18 (83 aa).

The disordered stretch occupies residues 1–23 (MKQRNNAKRVRLEQTRRPKKNPL).

Belongs to the bacterial ribosomal protein bS18 family. As to quaternary structure, part of the 30S ribosomal subunit. Forms a tight heterodimer with protein bS6.

In terms of biological role, binds as a heterodimer with protein bS6 to the central domain of the 16S rRNA, where it helps stabilize the platform of the 30S subunit. In Corynebacterium efficiens (strain DSM 44549 / YS-314 / AJ 12310 / JCM 11189 / NBRC 100395), this protein is Small ribosomal subunit protein bS18.